Reading from the N-terminus, the 336-residue chain is Glycerol-3-phosphate dehydrogenase [NAD(P)+] (336 aa).

NADPH contacts are provided by serine 16, tyrosine 17, histidine 37, and lysine 111. Residues lysine 111, glycine 140, and threonine 142 each coordinate sn-glycerol 3-phosphate. Alanine 144 serves as a coordination point for NADPH. 5 residues coordinate sn-glycerol 3-phosphate: lysine 196, aspartate 249, serine 259, arginine 260, and asparagine 261. The active-site Proton acceptor is lysine 196. Residue arginine 260 participates in NADPH binding. Residues valine 284 and glutamate 286 each contribute to the NADPH site.

It belongs to the NAD-dependent glycerol-3-phosphate dehydrogenase family.

It localises to the cytoplasm. The catalysed reaction is sn-glycerol 3-phosphate + NAD(+) = dihydroxyacetone phosphate + NADH + H(+). It carries out the reaction sn-glycerol 3-phosphate + NADP(+) = dihydroxyacetone phosphate + NADPH + H(+). It functions in the pathway membrane lipid metabolism; glycerophospholipid metabolism. Its function is as follows. Catalyzes the reduction of the glycolytic intermediate dihydroxyacetone phosphate (DHAP) to sn-glycerol 3-phosphate (G3P), the key precursor for phospholipid synthesis. This is Glycerol-3-phosphate dehydrogenase [NAD(P)+] from Actinobacillus pleuropneumoniae serotype 5b (strain L20).